We begin with the raw amino-acid sequence, 564 residues long: Probable diguanylate cyclase DgcQ (564 aa).

Transmembrane regions (helical) follow at residues 20–40 (LGPG…STLL) and 360–380 (IALT…WYVI). Residues 428–563 (HPFSVIQVDL…GRNRVFASDN (136 aa)) enclose the GGDEF domain. A Mg(2+)-binding site is contributed by aspartate 436. Residues asparagine 444, histidine 449, and aspartate 453 each coordinate substrate. Glutamate 479 is a Mg(2+) binding site. The active-site Proton acceptor is glutamate 479.

In terms of assembly, homodimer. It depends on Mg(2+) as a cofactor.

It is found in the cell inner membrane. It carries out the reaction 2 GTP = 3',3'-c-di-GMP + 2 diphosphate. It functions in the pathway glycan metabolism; bacterial cellulose biosynthesis. It participates in purine metabolism; 3',5'-cyclic di-GMP biosynthesis. Catalyzes the synthesis of cyclic-di-GMP (c-di-GMP) via the condensation of 2 GTP molecules. Cyclic-di-GMP is a second messenger which controls cell surface-associated traits in bacteria. Involved in the regulation of cellulose production. This is Probable diguanylate cyclase DgcQ from Shigella dysenteriae serotype 1 (strain Sd197).